A 396-amino-acid chain; its full sequence is Elongation factor Tu 2 (396 aa).

Positions Lys10–Gln206 constitute a tr-type G domain. The tract at residues Gly19 to Thr26 is G1. Gly19–Thr26 lines the GTP pocket. Thr26 contributes to the Mg(2+) binding site. The G2 stretch occupies residues Gly60–Ser64. The G3 stretch occupies residues Asp81–Gly84. GTP-binding positions include Asp81–His85 and Asn136–Asp139. The interval Asn136 to Asp139 is G4. The segment at Ser174–Leu176 is G5.

The protein belongs to the TRAFAC class translation factor GTPase superfamily. Classic translation factor GTPase family. EF-Tu/EF-1A subfamily. Monomer.

Its subcellular location is the cytoplasm. It catalyses the reaction GTP + H2O = GDP + phosphate + H(+). GTP hydrolase that promotes the GTP-dependent binding of aminoacyl-tRNA to the A-site of ribosomes during protein biosynthesis. In Myxococcus xanthus (strain DK1622), this protein is Elongation factor Tu 2.